The primary structure comprises 142 residues: Protein archease (142 aa).

Residues Asp12 and Asp141 each coordinate Ca(2+).

This sequence belongs to the archease family.

Activates the tRNA-splicing ligase complex by facilitating the enzymatic turnover of catalytic subunit RtcB. Acts by promoting the guanylylation of RtcB, a key intermediate step in tRNA ligation. Can also alter the NTP specificity of RtcB such that ATP, dGTP or ITP is used efficiently. The sequence is that of Protein archease from Thermococcus kodakarensis (strain ATCC BAA-918 / JCM 12380 / KOD1) (Pyrococcus kodakaraensis (strain KOD1)).